A 597-amino-acid polypeptide reads, in one-letter code: MKNIRNFSIIAHIDHGKSTLADRFIQYCGGLEMREMSEQVLDSMDIEKERGITIKAQTAALSYKARDGQVYHLNLIDTPGHVDFSYEVSRSLSACEGALLVVDASQGVEAQTVANCYTAIELGVEVVPVLNKIDLPAAEPERVSQEIEDIIGIEAIDAVRASAKSGIGIEDILETVVQKIPAPKGDADAPLKALIIDSWFDNYVGVVMLVRLVDGAVKPKDKIKFMATGAEHLVEQVGVFTPKSVQRSELRAGEVGFIIAGIKELKSAKVGDTITQVARPAAEALPGFKEVQSQVFAGLYPVESHDYDNLRDALEKLQLNDASLKFEPEVSQALGFGFRCGFLGLLHLEIVQERLEREFDMDLITTAPTVVYELLLKDGTVIEVENPSKLPDPSKIEEIREPIITSTILVPQDYVGAVMTLCNQKRGVQVNMQYMGRQVMLTYDLPMNEVVMDFFDKLKSTSRGYASLDYEFKCFQASDLVKLDVMVNGEKVDALSLIVHRQNAIYRGRELVSKMRELIPRQMFDIAVQAAIGNNIIARETVKALRKNVLAKCYGGDITRKKKLLEKQKAGKRRMKQVGNVEIPQEAFLAILQVSDK.

A tr-type G domain is found at 2–184 (KNIRNFSIIA…TVVQKIPAPK (183 aa)). GTP-binding positions include 14 to 19 (DHGKST) and 131 to 134 (NKID).

This sequence belongs to the TRAFAC class translation factor GTPase superfamily. Classic translation factor GTPase family. LepA subfamily.

It localises to the cell inner membrane. The catalysed reaction is GTP + H2O = GDP + phosphate + H(+). Required for accurate and efficient protein synthesis under certain stress conditions. May act as a fidelity factor of the translation reaction, by catalyzing a one-codon backward translocation of tRNAs on improperly translocated ribosomes. Back-translocation proceeds from a post-translocation (POST) complex to a pre-translocation (PRE) complex, thus giving elongation factor G a second chance to translocate the tRNAs correctly. Binds to ribosomes in a GTP-dependent manner. The protein is Elongation factor 4 of Laribacter hongkongensis (strain HLHK9).